A 140-amino-acid polypeptide reads, in one-letter code: Secreted RxLR effector protein 37 (140 aa).

The first 22 residues, 1 to 22 (MTYRLPFVAVILFVTAKHVVLA), serve as a signal peptide directing secretion. The short motif at 57 to 76 (RFLRQLEKKPGVNDKRDEER) is the RxLR-dEER element.

This sequence belongs to the RxLR effector family.

The protein resides in the secreted. It is found in the host nucleus. The protein localises to the host cytoplasm. Secreted effector that completely suppresses the host cell death induced by cell death-inducing proteins. This chain is Secreted RxLR effector protein 37, found in Plasmopara viticola (Downy mildew of grapevine).